The sequence spans 449 residues: Ribosomal protein uS12 methylthiotransferase RimO (449 aa).

The 112-residue stretch at P5–N116 folds into the MTTase N-terminal domain. The [4Fe-4S] cluster site is built by C14, C50, C79, C154, C158, and C161. The 230-residue stretch at T140–K369 folds into the Radical SAM core domain. Residues Q372 to L438 form the TRAM domain.

This sequence belongs to the methylthiotransferase family. RimO subfamily. [4Fe-4S] cluster serves as cofactor.

Its subcellular location is the cytoplasm. It carries out the reaction L-aspartate(89)-[ribosomal protein uS12]-hydrogen + (sulfur carrier)-SH + AH2 + 2 S-adenosyl-L-methionine = 3-methylsulfanyl-L-aspartate(89)-[ribosomal protein uS12]-hydrogen + (sulfur carrier)-H + 5'-deoxyadenosine + L-methionine + A + S-adenosyl-L-homocysteine + 2 H(+). In terms of biological role, catalyzes the methylthiolation of an aspartic acid residue of ribosomal protein uS12. In Rippkaea orientalis (strain PCC 8801 / RF-1) (Cyanothece sp. (strain PCC 8801)), this protein is Ribosomal protein uS12 methylthiotransferase RimO.